The sequence spans 215 residues: 3-isopropylmalate dehydratase small subunit (215 aa).

Belongs to the LeuD family. LeuD type 1 subfamily. In terms of assembly, heterodimer of LeuC and LeuD.

The enzyme catalyses (2R,3S)-3-isopropylmalate = (2S)-2-isopropylmalate. The protein operates within amino-acid biosynthesis; L-leucine biosynthesis; L-leucine from 3-methyl-2-oxobutanoate: step 2/4. Functionally, catalyzes the isomerization between 2-isopropylmalate and 3-isopropylmalate, via the formation of 2-isopropylmaleate. In Xanthomonas euvesicatoria pv. vesicatoria (strain 85-10) (Xanthomonas campestris pv. vesicatoria), this protein is 3-isopropylmalate dehydratase small subunit.